A 382-amino-acid chain; its full sequence is Sialidase (382 aa).

Arg37 provides a ligand contact to substrate. Catalysis depends on Asp62, which acts as the Proton acceptor. BNR repeat units lie at residues 71-82 (ARSTDFGKTWSY), 140-151 (IYSDDNGLTWSN), and 208-219 (IYSKDNGETWTM). Arg245 contacts substrate. The BNR 4 repeat unit spans residues 255-266 (YISHDLGTTWEI). The Nucleophile role is filled by Tyr347.

Belongs to the glycosyl hydrolase 33 family.

It is found in the secreted. It catalyses the reaction Hydrolysis of alpha-(2-&gt;3)-, alpha-(2-&gt;6)-, alpha-(2-&gt;8)- glycosidic linkages of terminal sialic acid residues in oligosaccharides, glycoproteins, glycolipids, colominic acid and synthetic substrates.. Sialidases have been suggested to be pathogenic factors in microbial infections. In Clostridium perfringens, this protein is Sialidase (nanH).